Reading from the N-terminus, the 307-residue chain is tRNA dimethylallyltransferase (307 aa).

16–23 (GCTAVGKT) is an ATP binding site. Residue 18–23 (TAVGKT) coordinates substrate. The interaction with substrate tRNA stretch occupies residues 41–44 (DSLL).

The protein belongs to the IPP transferase family. As to quaternary structure, monomer. It depends on Mg(2+) as a cofactor.

The enzyme catalyses adenosine(37) in tRNA + dimethylallyl diphosphate = N(6)-dimethylallyladenosine(37) in tRNA + diphosphate. In terms of biological role, catalyzes the transfer of a dimethylallyl group onto the adenine at position 37 in tRNAs that read codons beginning with uridine, leading to the formation of N6-(dimethylallyl)adenosine (i(6)A). This Opitutus terrae (strain DSM 11246 / JCM 15787 / PB90-1) protein is tRNA dimethylallyltransferase.